Here is a 342-residue protein sequence, read N- to C-terminus: Phosphate acyltransferase (342 aa).

This sequence belongs to the PlsX family. As to quaternary structure, homodimer. Probably interacts with PlsY.

Its subcellular location is the cytoplasm. It catalyses the reaction a fatty acyl-[ACP] + phosphate = an acyl phosphate + holo-[ACP]. The protein operates within lipid metabolism; phospholipid metabolism. In terms of biological role, catalyzes the reversible formation of acyl-phosphate (acyl-PO(4)) from acyl-[acyl-carrier-protein] (acyl-ACP). This enzyme utilizes acyl-ACP as fatty acyl donor, but not acyl-CoA. The protein is Phosphate acyltransferase of Shewanella pealeana (strain ATCC 700345 / ANG-SQ1).